The following is a 249-amino-acid chain: Putative [LysW]-aminoadipate/[LysW]-glutamate kinase (249 aa).

The substrate site is built by Arg-63 and Asn-166.

It belongs to the acetylglutamate kinase family. LysZ subfamily.

The protein localises to the cytoplasm. The catalysed reaction is [amino-group carrier protein]-C-terminal-N-(1,4-dicarboxybutan-1-yl)-L-glutamine + ATP = [amino-group carrier protein]-C-terminal-N-(1-carboxy-5-phosphooxy-5-oxopentan-1-yl)-L-glutamine + ADP. The enzyme catalyses [amino-group carrier protein]-C-terminal-gamma-(L-glutamyl)-L-glutamate + ATP = [amino-group carrier protein]-C-terminal-gamma-(5-phospho-L-glutamyl)-L-glutamate + ADP. It functions in the pathway amino-acid biosynthesis; L-lysine biosynthesis via AAA pathway; L-lysine from L-alpha-aminoadipate (Thermus route): step 2/5. It participates in amino-acid biosynthesis; L-arginine biosynthesis. Functionally, involved in both the arginine and lysine biosynthetic pathways. Phosphorylates the LysW-bound precursors glutamate (for arginine biosynthesis), respectively alpha-aminoadipate (for lysine biosynthesis). In Pyrococcus furiosus (strain ATCC 43587 / DSM 3638 / JCM 8422 / Vc1), this protein is Putative [LysW]-aminoadipate/[LysW]-glutamate kinase.